Consider the following 306-residue polypeptide: Recombination-associated protein RdgC (306 aa).

This sequence belongs to the RdgC family.

Its subcellular location is the cytoplasm. The protein resides in the nucleoid. Its function is as follows. May be involved in recombination. The protein is Recombination-associated protein RdgC of Pseudomonas paraeruginosa (strain DSM 24068 / PA7) (Pseudomonas aeruginosa (strain PA7)).